Here is a 420-residue protein sequence, read N- to C-terminus: UDP-N-acetylmuramoylalanine--D-glutamate ligase (420 aa).

Residue 109–115 (GSAGKTT) coordinates ATP.

It belongs to the MurCDEF family.

The protein localises to the cytoplasm. It carries out the reaction UDP-N-acetyl-alpha-D-muramoyl-L-alanine + D-glutamate + ATP = UDP-N-acetyl-alpha-D-muramoyl-L-alanyl-D-glutamate + ADP + phosphate + H(+). It functions in the pathway cell wall biogenesis; peptidoglycan biosynthesis. Functionally, cell wall formation. Catalyzes the addition of glutamate to the nucleotide precursor UDP-N-acetylmuramoyl-L-alanine (UMA). This chain is UDP-N-acetylmuramoylalanine--D-glutamate ligase, found in Chlamydia abortus (strain DSM 27085 / S26/3) (Chlamydophila abortus).